The primary structure comprises 295 residues: 4-hydroxy-tetrahydrodipicolinate synthase (295 aa).

Pyruvate is bound at residue T48. Residue Y136 is the Proton donor/acceptor of the active site. K164 acts as the Schiff-base intermediate with substrate in catalysis. I206 provides a ligand contact to pyruvate.

Belongs to the DapA family. Homotetramer; dimer of dimers.

The protein localises to the cytoplasm. The catalysed reaction is L-aspartate 4-semialdehyde + pyruvate = (2S,4S)-4-hydroxy-2,3,4,5-tetrahydrodipicolinate + H2O + H(+). The protein operates within amino-acid biosynthesis; L-lysine biosynthesis via DAP pathway; (S)-tetrahydrodipicolinate from L-aspartate: step 3/4. In terms of biological role, catalyzes the condensation of (S)-aspartate-beta-semialdehyde [(S)-ASA] and pyruvate to 4-hydroxy-tetrahydrodipicolinate (HTPA). The protein is 4-hydroxy-tetrahydrodipicolinate synthase of Actinobacillus pleuropneumoniae serotype 7 (strain AP76).